An 83-amino-acid chain; its full sequence is Small ribosomal subunit protein bS16 (83 aa).

The protein belongs to the bacterial ribosomal protein bS16 family.

This Albidiferax ferrireducens (strain ATCC BAA-621 / DSM 15236 / T118) (Rhodoferax ferrireducens) protein is Small ribosomal subunit protein bS16.